Here is a 309-residue protein sequence, read N- to C-terminus: Olfactory receptor 10V1 (309 aa).

The Extracellular portion of the chain corresponds to 1-25 (MEGINKTAKMQFFFRPFSPDPEVQM). Residue Asn5 is glycosylated (N-linked (GlcNAc...) asparagine). A helical transmembrane segment spans residues 26–46 (LIFVVFLMMYLTSLGGNATIA). The Cytoplasmic portion of the chain corresponds to 47–54 (VIVQINHS). The helical transmembrane segment at 55-75 (LHTPMYFFLANLAVLEIFYTS) threads the bilayer. Over 76-100 (SITPLALANLLSMGKTPVSITGCGT) the chain is Extracellular. Residues Cys98 and Cys190 are joined by a disulfide bond. A helical transmembrane segment spans residues 101 to 121 (QMFFFVFLGGADCVLLVVMAY). Residues 122–140 (DQFIAICHPLRYRLIMSWS) lie on the Cytoplasmic side of the membrane. The helical transmembrane segment at 141-161 (LCVELLVGSLVLGFLLSLPLT) threads the bilayer. At 162–198 (ILIFHLPFCHNDEIYHFYCDMPAVMRLACADTRVHKT) the chain is on the extracellular side. Residues 199 to 218 (ALYIISFIVLSIPLSLISIS) form a helical membrane-spanning segment. Topologically, residues 219–238 (YVFIVVAILRIRSAEGRQQA) are cytoplasmic. A helical membrane pass occupies residues 239–259 (YSTCSSHILVVLLQYGCTSFI). The Extracellular segment spans residues 260–272 (YLSPSSSYSPEMG). The chain crosses the membrane as a helical span at residues 273–293 (RVVSVAYTFITPILNPLIYSL). Residues 294-309 (RNKELKDALRKALRKF) are Cytoplasmic-facing.

The protein belongs to the G-protein coupled receptor 1 family.

Its subcellular location is the cell membrane. Functionally, odorant receptor. In Homo sapiens (Human), this protein is Olfactory receptor 10V1 (OR10V1).